Here is a 493-residue protein sequence, read N- to C-terminus: Cytoplasmic tRNA 2-thiolation protein 2 (493 aa).

S489 is subject to Phosphoserine.

It belongs to the CTU2/NCS2 family. In terms of assembly, interacts with NCS6 and URM1. May act by forming a heterodimer with NCS6.

It is found in the cytoplasm. It functions in the pathway tRNA modification; 5-methoxycarbonylmethyl-2-thiouridine-tRNA biosynthesis. Plays a central role in 2-thiolation of mcm(5)S(2)U at tRNA wobble positions of tRNA(Lys), tRNA(Glu) and tRNA(Gln). May act by forming a heterodimer with NCS6 that ligates sulfur from thiocarboxylated URM1 onto the uridine of tRNAs at wobble position. Prior mcm(5) tRNA modification by the elongator complex is required for 2-thiolation. May also be involved in protein urmylation. This is Cytoplasmic tRNA 2-thiolation protein 2 from Saccharomyces cerevisiae (strain AWRI1631) (Baker's yeast).